The following is a 60-amino-acid chain: Protein YmjC (60 aa).

The tract at residues 40 to 60 is disordered; that stretch reads HKPYPTNKMQTTSGKKVIQDR.

In Escherichia coli (strain K12), this protein is Protein YmjC (ymjC).